The primary structure comprises 359 residues: Alanine racemase, biosynthetic (359 aa).

Lysine 34 functions as the Proton acceptor; specific for D-alanine in the catalytic mechanism. The residue at position 34 (lysine 34) is an N6-(pyridoxal phosphate)lysine. Arginine 129 is a substrate binding site. Catalysis depends on tyrosine 255, which acts as the Proton acceptor; specific for L-alanine. Methionine 303 provides a ligand contact to substrate.

The protein belongs to the alanine racemase family. Pyridoxal 5'-phosphate is required as a cofactor.

It carries out the reaction L-alanine = D-alanine. It participates in amino-acid biosynthesis; D-alanine biosynthesis; D-alanine from L-alanine: step 1/1. The protein operates within cell wall biogenesis; peptidoglycan biosynthesis. Catalyzes the interconversion of L-alanine and D-alanine. Provides the D-alanine required for cell wall biosynthesis. This Escherichia coli O6:H1 (strain CFT073 / ATCC 700928 / UPEC) protein is Alanine racemase, biosynthetic (alr).